Consider the following 422-residue polypeptide: MVSESHHEALAAPPVTTVATVLPHNATEPASPGEGKEDAFSKLKEKFMNELHKIPLPPWALIAIAIVAVLLVLTCCFCICKKCLFKKKNKKKGKEKGGKNAINMKDVKDLGKTMKDQALKDDDAETGLTDGEEKEEPKEEEKLGKLQYSLDYDFQNNQLLVGIIQAAELPALDMGGTSDPYVKVFLLPDKKKKFETKVHRKTLNPVFNEQFTFKVPYSELGGKTLVMAVYDFDRFSKHDIIGEFKVPMNTVDFGHVTEEWRDLQSAEKEEQEKLGDICFSLRYVPTAGKLTVVILEAKNLKKMDVGGLSDPYVKIHLMQNGKRLKKKKTTIKKNTLNPYYNESFSFEVPFEQIQKVQVVVTVLDYDKIGKNDAIGKVFVGYNSTGAELRHWSDMLANPRRPIAQWHTLQVEEEVDAMLAVKK.

At 1–57 the chain is on the vesicular side; sequence MVSESHHEALAAPPVTTVATVLPHNATEPASPGEGKEDAFSKLKEKFMNELHKIPLP. Asn25 is a glycosylation site (N-linked (GlcNAc...) asparagine). A helical transmembrane segment spans residues 58-80; sequence PWALIAIAIVAVLLVLTCCFCIC. Residues Cys75, Cys76, Cys78, Cys80, and Cys83 are each lipidated (S-palmitoyl cysteine). Topologically, residues 81–422 are cytoplasmic; sequence KKCLFKKKNK…EVDAMLAVKK (342 aa). The segment at 113 to 142 is disordered; the sequence is TMKDQALKDDDAETGLTDGEEKEEPKEEEK. The span at 122 to 134 shows a compositional bias: acidic residues; that stretch reads DDAETGLTDGEEK. Residue Thr129 is modified to Phosphothreonine. Positions 136–382 are phospholipid binding; it reads EPKEEEKLGK…AIGKVFVGYN (247 aa). The 120-residue stretch at 142–261 folds into the C2 1 domain; sequence KLGKLQYSLD…DFGHVTEEWR (120 aa). Positions 172, 173, and 179 each coordinate Ca(2+). A Phosphotyrosine modification is found at Tyr230. Ca(2+) contacts are provided by Asp231, Phe232, Asp233, Ser236, Lys237, and Asp239. The residue at position 265 (Ser265) is a Phosphoserine. The C2 2 domain maps to 273 to 406; it reads KLGDICFSLR…NPRRPIAQWH (134 aa). 2 residues coordinate Ca(2+): Asp304 and Asp310. Phosphoserine is present on residues Ser343 and Ser345. Ca(2+)-binding residues include Asp364, Asp366, and Asp372.

Belongs to the synaptotagmin family. Homotetramer. Heterodimer; heterodimerizes with SYT2 in presence of calcium. Interacts with SCAMP5. Interacts with STON2. Forms a complex with SV2B, syntaxin 1 and SNAP25. Interacts with SV2A, SV2B and SV2C. Interacts with RIMS1. Interacts with PRRT2. Interacts with DNAJC5 in a phosphorylation-dependent manner. Interacts (via N-terminus) with RAB3A. Interacts with SYT12. Interacts with calmodulin. Interacts with DNM1 (via C-terminal proline-rich domain (PRD)); this interaction facilitates vesicle fission during clathrin-mediated endocytosis (CME). Requires Ca(2+) as cofactor. Glycosylated.

Its subcellular location is the cytoplasmic vesicle. The protein localises to the secretory vesicle membrane. It is found in the secretory vesicle. The protein resides in the synaptic vesicle membrane. It localises to the chromaffin granule membrane. Its subcellular location is the cytoplasm. In terms of biological role, calcium sensor that participates in triggering neurotransmitter release at the synapse. May have a regulatory role in the membrane interactions during trafficking of synaptic vesicles at the active zone of the synapse. It binds acidic phospholipids with a specificity that requires the presence of both an acidic head group and a diacyl backbone. A Ca(2+)-dependent interaction between synaptotagmin and putative receptors for activated protein kinase C has also been reported. It can bind to at least three additional proteins in a Ca(2+)-independent manner; these are neurexins, syntaxin and AP2. Plays a role in dendrite formation by melanocytes. This is Synaptotagmin-1 from Bos taurus (Bovine).